Reading from the N-terminus, the 694-residue chain is uncharacterized protein (694 aa).

Positions 15 to 51 (HKEKMELLDQFDNERKEWESQWKIMQKKIEELCREVK) form a coiled coil. Disordered stretches follow at residues 259 to 286 (LKRN…EQAY), 461 to 490 (QNHS…QSND), and 643 to 680 (NASH…RRTT). 2 stretches are compositionally biased toward polar residues: residues 272-283 (STSRNFPSSDSE) and 476-490 (DTSS…QSND). Positions 663–677 (SRWASRSPSAPPALR) are enriched in low complexity.

This is an uncharacterized protein from Homo sapiens (Human).